The chain runs to 154 residues: Periplasmic nitrate reductase, electron transfer subunit (154 aa).

The signal sequence occupies residues 1-24 (MSMHPALRLLATVLVALGAGPAFT). The tract at residues 27-47 (APRLTGADRPMSEVAAPPLPE) is disordered. Positions 68, 82, 85, 86, 103, 122, 125, and 126 each coordinate heme c.

This sequence belongs to the NapB family. As to quaternary structure, component of the periplasmic nitrate reductase NapAB complex composed of NapA and NapB. Binds 2 heme C groups per subunit.

It is found in the periplasm. Functionally, electron transfer subunit of the periplasmic nitrate reductase complex NapAB. Receives electrons from the membrane-anchored tetraheme c-type NapC protein and transfers these to NapA subunit, thus allowing electron flow between membrane and periplasm. Essential for periplasmic nitrate reduction with nitrate as the terminal electron acceptor. In Cereibacter sphaeroides (Rhodobacter sphaeroides), this protein is Periplasmic nitrate reductase, electron transfer subunit.